Here is a 216-residue protein sequence, read N- to C-terminus: Transmembrane protein 139 (216 aa).

A signal peptide spans 1–25 (MVPMHLLGRLEKPLLLLCCASFLLG). The Extracellular portion of the chain corresponds to 26-34 (LALLGIKTD). A helical transmembrane segment spans residues 35-55 (ITPVAYFFLTLGGFFLFAYLL). Residues 56–216 (VRFLEWGLRS…VFYEDNWAPP (161 aa)) are Cytoplasmic-facing. The disordered stretch occupies residues 104-163 (RPQELDQPPPYSTVVIPPAPEEEQPSHPEGSRRAKLEQRRMASEGSMAQEGSPGRAPINL). A compositionally biased stretch (basic and acidic residues) spans 127–145 (QPSHPEGSRRAKLEQRRMA). 2 positions are modified to phosphoserine: Ser-146 and Ser-155.

Interacts with isoform 2 of SLC4A1.

Its subcellular location is the membrane. Its function is as follows. May be involved in cellular trafficking of proteins such as SLC4A1. The polypeptide is Transmembrane protein 139 (TMEM139) (Homo sapiens (Human)).